The primary structure comprises 161 residues: Globin CTT-IX (161 aa).

Residues 1–16 (MKFFIVLALCIVGAIA) form the signal peptide. The 144-residue stretch at 18–161 (PVSSDQANAI…NIFGMIFAHL (144 aa)) folds into the Globin domain. 2 residues coordinate heme b: His76 and His111.

Belongs to the globin family. As to quaternary structure, homodimer.

The sequence is that of Globin CTT-IX (CTT-9) from Chironomus thummi thummi (Midge).